A 528-amino-acid chain; its full sequence is Neuronal acetylcholine receptor subunit alpha-2 (528 aa).

The N-terminal stretch at 1–23 (MGWPCRSIIPLLVWCFVTLQAAT) is a signal peptide. The Extracellular segment spans residues 24–239 (REQKQPHGFA…ITFYFVIRRL (216 aa)). Residues N54 and N104 are each glycosylated (N-linked (GlcNAc...) asparagine). Intrachain disulfides connect C158-C172 and C222-C223. 3 helical membrane-spanning segments follow: residues 240–264 (PLFY…VFYL), 272–290 (ITLC…LLIT), and 306–327 (YLLF…VLNV). Topologically, residues 328–501 (HHRSPSTHTM…WKYVAMVIDR (174 aa)) are cytoplasmic. The span at 390 to 410 (DDKWEEEEEEEEEEEEEEEEE) shows a compositional bias: acidic residues. The interval 390-427 (DDKWEEEEEEEEEEEEEEEEEKAYPSRVPSGGSQGTQC) is disordered. Residues 502-520 (IFLWMFIIVCLLGTVGLFL) form a helical membrane-spanning segment.

This sequence belongs to the ligand-gated ion channel (TC 1.A.9) family. Acetylcholine receptor (TC 1.A.9.1) subfamily. Alpha-2/CHRNA2 sub-subfamily. Neuronal AChR is composed of two different types of subunits: alpha and non-alpha (beta). CHRNA2/alpha-2 subunit can be combined to CHRNB2/beta-2 or CHRNB4/beta-4 to give rise to functional receptors. Both CHRNA2:CHRNB2 and CHRNA2:CHRNB4 nAChR complexes are heteropentamers with two subtypes: LS (low agonist sensitivity) with a (CHRNA2)3:(CHRNB2/4)2 and HS (high agonist sensitivity) with a (CHRNA2)2:(CHRNB2/4)3 stoichiometries; the subtypes differ in their subunit binding interfaces which are involved in ligand binding.

The protein localises to the synaptic cell membrane. It localises to the cell membrane. It catalyses the reaction Ca(2+)(in) = Ca(2+)(out). The enzyme catalyses K(+)(in) = K(+)(out). It carries out the reaction Na(+)(in) = Na(+)(out). In terms of biological role, component of neuronal acetylcholine receptors (nAChRs) that function as pentameric, ligand-gated cation channels with high calcium permeability among other activities. nAChRs are excitatory neurotrasnmitter receptors formed by a collection of nAChR subunits known to mediate synaptic transmission in the nervous system and the neuromuscular junction. Each nAchR subunit confers differential attributes to channel properties, including activation, deactivation and desensitization kinetics, pH sensitivity, cation permeability, and binding to allosteric modulators. CHRNA2 forms heteropentameric neuronal acetylcholine receptors with CHRNB2 and CHRNB4 and plays a role in nicotine dependence. The sequence is that of Neuronal acetylcholine receptor subunit alpha-2 (CHRNA2) from Gallus gallus (Chicken).